The primary structure comprises 571 residues: Protein EARLY STARVATION 1, chloroplastic (571 aa).

2 disordered regions span residues 142-162 (RHSS…KDAG) and 215-254 (GSYR…TEHD). The span at 145–155 (SCSSQSLPQQQ) shows a compositional bias: low complexity.

This sequence belongs to the ESV1 family.

The protein localises to the plastid. Its subcellular location is the chloroplast stroma. Its function is as follows. Binds preferentially to highly ordered alpha-glucans, such as starch and crystalline maltodextrins. Involved in the organization of the starch granule matrix, thus influencing starch turnover by modulating the accessibility of starch polymers to modifying and degrading enzymes. Required for the control of starch degradation in leaves and starch distribution in nonphotosynthetic parts. Promotes gravitropic responses, negative in shoots but positive in roots, by facilitating starch granules (statoliths) formation in hypocotyls and roots columella. This Marchantia polymorpha (Common liverwort) protein is Protein EARLY STARVATION 1, chloroplastic.